The chain runs to 353 residues: Thiamine-phosphate synthase (353 aa).

The segment at 1–128 (MELMVVEADA…ASTAAEIRYG (128 aa)) is unknown. Residues 129–353 (LYDLEVRILE…ASRTLLQTLA (225 aa)) form a thiamine-phosphate synthase region. 4-amino-2-methyl-5-(diphosphooxymethyl)pyrimidine contacts are provided by residues 185–189 (QYRRK) and N217. Residues D218 and D237 each coordinate Mg(2+). S256 contributes to the 4-amino-2-methyl-5-(diphosphooxymethyl)pyrimidine binding site. 282 to 284 (TKT) contributes to the 2-[(2R,5Z)-2-carboxy-4-methylthiazol-5(2H)-ylidene]ethyl phosphate binding site. 4-amino-2-methyl-5-(diphosphooxymethyl)pyrimidine is bound at residue K285. G312 provides a ligand contact to 2-[(2R,5Z)-2-carboxy-4-methylthiazol-5(2H)-ylidene]ethyl phosphate.

Belongs to the thiamine-phosphate synthase family. Mg(2+) is required as a cofactor.

It catalyses the reaction 2-[(2R,5Z)-2-carboxy-4-methylthiazol-5(2H)-ylidene]ethyl phosphate + 4-amino-2-methyl-5-(diphosphooxymethyl)pyrimidine + 2 H(+) = thiamine phosphate + CO2 + diphosphate. The enzyme catalyses 2-(2-carboxy-4-methylthiazol-5-yl)ethyl phosphate + 4-amino-2-methyl-5-(diphosphooxymethyl)pyrimidine + 2 H(+) = thiamine phosphate + CO2 + diphosphate. The catalysed reaction is 4-methyl-5-(2-phosphooxyethyl)-thiazole + 4-amino-2-methyl-5-(diphosphooxymethyl)pyrimidine + H(+) = thiamine phosphate + diphosphate. The protein operates within cofactor biosynthesis; thiamine diphosphate biosynthesis; thiamine phosphate from 4-amino-2-methyl-5-diphosphomethylpyrimidine and 4-methyl-5-(2-phosphoethyl)-thiazole: step 1/1. Its function is as follows. Condenses 4-methyl-5-(beta-hydroxyethyl)thiazole monophosphate (THZ-P) and 2-methyl-4-amino-5-hydroxymethyl pyrimidine pyrophosphate (HMP-PP) to form thiamine monophosphate (TMP). This chain is Thiamine-phosphate synthase, found in Synechococcus sp. (strain CC9311).